Here is a 569-residue protein sequence, read N- to C-terminus: MAKNDNELYKGLDDLERNKGESNYLRGTIVEGLNDPITGAIAEDDTKLLKFHGSYMQDDRDLRQERRKQKLEPLYAFMIRVRIPGGKVSTDQWLKLDALADNYAGEQIRLTTRQTMQYHGILKRNLKKSMQSIHDAVLDSIAACGDVTRNVMCNPNPYQSDIYAEVNRAADSISEHLLPKTTAYHEIWLDGEKVVDTKKEDHEPMYGKTYLPRKFKIGIAVPPSNDIDVYSQDIGLIGIVENDELIGYNVSVGGGMGMKHDDLRTYPQVGKVIGFIPKDKAEEVCEKILTIQRDYGDRSDRMQARFKYTVDRKGLDWIKQELNDRLGWELEEAKSFEFEDNGDRLGWTEGSGKHHYTLFIQNGRIKDTEDFKLKTAIKELAKVHKGDFRMTPNQNLIIANVDEKDKPEIQKIIDNYGLTDGKNYSGLRRNSMACVAFPTCGLAMAESERYLPSLVGKIEDLLDEFGLSEEEITIRMTGCPNGCARPALAEISFIGKAPGKYNFYLGGSFKGDRLNKLYKENIGEKEILESLRPILEQYSKEREKGEHFGDFVVRKGIVEKVTDGRDFRG.

Cys-434, Cys-440, Cys-479, and Cys-483 together coordinate [4Fe-4S] cluster. Position 483 (Cys-483) interacts with siroheme.

It belongs to the nitrite and sulfite reductase 4Fe-4S domain family. As to quaternary structure, alpha(8)-beta(8). The alpha component is a flavoprotein, the beta component is a hemoprotein. Requires siroheme as cofactor. [4Fe-4S] cluster serves as cofactor.

It catalyses the reaction hydrogen sulfide + 3 NADP(+) + 3 H2O = sulfite + 3 NADPH + 4 H(+). It participates in sulfur metabolism; hydrogen sulfide biosynthesis; hydrogen sulfide from sulfite (NADPH route): step 1/1. Component of the sulfite reductase complex that catalyzes the 6-electron reduction of sulfite to sulfide. This is one of several activities required for the biosynthesis of L-cysteine from sulfate. This Staphylococcus carnosus (strain TM300) protein is Sulfite reductase [NADPH] hemoprotein beta-component.